We begin with the raw amino-acid sequence, 2617 residues long: Non-reducing polyketide synthase epaA (2617 aa).

An N-terminal acylcarrier protein transacylase domain (SAT) region spans residues 95 to 231 (PNILLSPMVV…AARSISSLQQ (137 aa)). Cysteine 132 (nucleophile; for transacylase activity) is an active-site residue. Histidine 250 (proton donor/acceptor; for transacylase activity) is an active-site residue. The Ketosynthase family 3 (KS3) domain occupies 372–790 (PNEIAVIGMS…GSNASMVVAQ (419 aa)). Catalysis depends on for beta-ketoacyl synthase activity residues cysteine 539, histidine 674, and histidine 713. The malonyl-CoA:ACP transacylase (MAT) domain stretch occupies residues 902 to 1193 (FGGQISNYVG…ITSMASRALG (292 aa)). An N-terminal hotdog fold region spans residues 1282–1413 (PKTLWSLIEA…GKLAFLSGQD (132 aa)). Residues 1282 to 1591 (PKTLWSLIEA…YHKVAKASMS (310 aa)) enclose the PKS/mFAS DH domain. The interval 1310–1589 (LVSGHVIANT…INYHKVAKAS (280 aa)) is product template (PT) domain. Histidine 1314 functions as the Proton acceptor; for dehydratase activity in the catalytic mechanism. The interval 1443–1591 (ADDIIQGRNI…YHKVAKASMS (149 aa)) is C-terminal hotdog fold. The active-site Proton donor; for dehydratase activity is the aspartate 1499. The tract at residues 1600–1651 (TEAAPSSSTRAHPTSSSSPRLPGPSVPEDKSQNETQPAGTNAVAKKKSEKSA) is disordered. Positions 1602-1619 (AAPSSSTRAHPTSSSSPR) are enriched in low complexity. Residues 1653-1727 (QNVLEKTRAL…GLVEYVQSAV (75 aa)) enclose the Carrier domain. Serine 1687 carries the post-translational modification O-(pantetheine 4'-phosphoryl)serine. Residues 1728 to 1799 (GVPTNGDEPD…PAMPPASSKT (72 aa)) form a disordered region. The span at 1750-1766 (LAPSPSSSSSSTNLTED) shows a compositional bias: low complexity. A compositionally biased stretch (polar residues) spans 1769–1785 (LDQAETTTNISSYPGQT). Residues 1970–2158 (DSLLNKLSYR…VGYGQVDWTD (189 aa)) form a methyltransferase domain region. The NADPH-binding (R) domain stretch occupies residues 2240 to 2485 (ITGATGSLGV…LCWTPVNDVA (246 aa)).

Pantetheine 4'-phosphate is required as a cofactor.

It participates in secondary metabolite biosynthesis. In terms of biological role, non-reducing polyketide synthase; part of the gene cluster that mediates the biosynthesis of nigerpyrone and its derivatives carbonarone A and pestalamide A. The biosynthesis pathway begins with the polyketide assembly by epaA to form phenylacetyl triketide precursor from successive condensation of two malonyl-CoA, presumably with one phenylacetyl-CoA starter unit produced by the phenylacetyl-CoA ligase epaB. For the nigerpyrone biosynthesis, the reactive polyketide chain is released as an aldehyde through the R-domain. A nonenzymatic cyclization and dehydration may create nigerpyrone. For the biosynthesis of carbonarone A and pestalamide A, an extra methyl group is added through the C-methyltransferase domain. Several further steps involving the dehydrogenase orf1, the cytochrome P450 monooxygenase orf2 and the FAD-dependent monooxygenase orf3 are required to form a carbonarone A precursor which is converted to carbonarone A via cyclization. The O-acetyltransferase epaC could catalyze the transfer of 2-methylsuccinyl-CoA, a common intermediate in the ethylmalonyl-CoA pathway, to generate the final product pestalamide A. In Aspergillus niger (strain ATCC MYA-4892 / CBS 513.88 / FGSC A1513), this protein is Non-reducing polyketide synthase epaA.